Reading from the N-terminus, the 72-residue chain is DNA-directed RNA polymerase subunit omega (72 aa).

It belongs to the RNA polymerase subunit omega family. As to quaternary structure, the RNAP catalytic core consists of 2 alpha, 1 beta, 1 beta' and 1 omega subunit. When a sigma factor is associated with the core the holoenzyme is formed, which can initiate transcription.

It carries out the reaction RNA(n) + a ribonucleoside 5'-triphosphate = RNA(n+1) + diphosphate. Functionally, promotes RNA polymerase assembly. Latches the N- and C-terminal regions of the beta' subunit thereby facilitating its interaction with the beta and alpha subunits. The sequence is that of DNA-directed RNA polymerase subunit omega from Clostridium kluyveri (strain NBRC 12016).